Reading from the N-terminus, the 149-residue chain is Ribosome-binding factor A (149 aa).

The disordered stretch occupies residues 124 to 149 (AKLREGAVPAGDADPYKTSSKSESEE).

The protein belongs to the RbfA family. As to quaternary structure, monomer. Binds 30S ribosomal subunits, but not 50S ribosomal subunits or 70S ribosomes.

The protein resides in the cytoplasm. One of several proteins that assist in the late maturation steps of the functional core of the 30S ribosomal subunit. Associates with free 30S ribosomal subunits (but not with 30S subunits that are part of 70S ribosomes or polysomes). Required for efficient processing of 16S rRNA. May interact with the 5'-terminal helix region of 16S rRNA. This chain is Ribosome-binding factor A, found in Corynebacterium glutamicum (strain R).